The chain runs to 649 residues: Flavin-dependent oxygenase ucdD (649 aa).

5 residues coordinate FAD: Q92, I185, Y344, D370, and S386.

This sequence belongs to the PheA/TfdB FAD monooxygenase family. In terms of assembly, homodimer. FAD is required as a cofactor.

The protein operates within secondary metabolite biosynthesis. Its function is as follows. Nonribosomal peptide synthetase that mediates the biosynthesis of usterphenyllins and uscandidusins, p-terphenyl derivatives. Within the pathway, ucdD catalyzes the formation of 3,15-dihydroxyterphenyllin via dihydroxylation at C-3 of ring A and C-15 of ring C of the terphenyllin intermediate. The pathway begin with the biosynthesis of 4-hydroxyphenylpyruvate (HPPA) from L-tyrosine, possibly by the aminotransferase ucdG. The nonribosomal peptide synthetase ucdA then condenses two HPPA units to produce atromentin. The key step in this pathway is the reduction and dehydration of atromentin to form a terphenyl triol intermediate, performed by the NAD-dependent dehydrogenase ucdB. Further O-methylation by the methyltransferase ucdC forms terphenyllin carrying two methoxy moieties at C-9 and C-12, and subsequent dihydroxylation at C-3 of ring A and C-15 of ring C by the flavin-dependent oxygenase ucdD leads to 3,15-dihydroxyterphenyllin. Prenylation by ucdE at position C-5 of ring A forms usterphenyllin B, and is followed by a second prenylation at position C-14 of ring C to form usterphenyllin A. The following furan ring formation that leads to uscandidusins A and B was proven to be an unexpected spontaneous non-enzymatic reaction. The chain is Flavin-dependent oxygenase ucdD from Aspergillus ustus.